A 654-amino-acid chain; its full sequence is Peptide-N(4)-(N-acetyl-beta-glucosaminyl)asparagine amidase (654 aa).

An N-acetylalanine modification is found at alanine 2. Residues glutamate 30–lysine 91 enclose the PUB domain. The interval arginine 112–serine 163 is disordered. Polar residues predominate over residues serine 124–serine 163. Threonine 137 bears the Phosphothreonine mark. Cysteine 250, cysteine 253, cysteine 283, and cysteine 286 together coordinate Zn(2+). Residue cysteine 309 is the Nucleophile of the active site. Catalysis depends on residues histidine 336 and aspartate 353. One can recognise a PAW domain in the interval glutamate 454–leucine 654.

This sequence belongs to the transglutaminase-like superfamily. PNGase family. Component of a complex required to couple retrotranslocation, ubiquitination and deglycosylation composed of NGLY1, SAKS1, AMFR, VCP and RAD23B. Interacts with the proteasome components RAD23B and PSMC1. Interacts with directly with VCP. Interacts with DERL1, bringing it close to the endoplasmic reticulum membrane. Interacts with SAKS1. The cofactor is Zn(2+).

It is found in the cytoplasm. The enzyme catalyses Hydrolysis of an N(4)-(acetyl-beta-D-glucosaminyl)asparagine residue in which the glucosamine residue may be further glycosylated, to yield a (substituted) N-acetyl-beta-D-glucosaminylamine and a peptide containing an aspartate residue.. Its activity is regulated as follows. Inhibited by Z-VAD-fmk, a well-known caspase inhibitor, which inhibits enzyme activity through covalent binding of the carbohydrate to the single Cys-306 residue. In terms of biological role, specifically deglycosylates the denatured form of N-linked glycoproteins in the cytoplasm and assists their proteasome-mediated degradation. Cleaves the beta-aspartyl-glucosamine (GlcNAc) of the glycan and the amide side chain of Asn, converting Asn to Asp. Prefers proteins containing high-mannose over those bearing complex type oligosaccharides. Can recognize misfolded proteins in the endoplasmic reticulum that are exported to the cytosol to be destroyed and deglycosylate them, while it has no activity toward native proteins. Deglycosylation is a prerequisite for subsequent proteasome-mediated degradation of some, but not all, misfolded glycoproteins. The polypeptide is Peptide-N(4)-(N-acetyl-beta-glucosaminyl)asparagine amidase (NGLY1) (Homo sapiens (Human)).